We begin with the raw amino-acid sequence, 141 residues long: Galactose-6-phosphate isomerase subunit LacA (141 aa).

Belongs to the LacAB/RpiB family. In terms of assembly, heteromultimeric protein consisting of LacA and LacB.

It catalyses the reaction aldehydo-D-galactose 6-phosphate = keto-D-tagatose 6-phosphate. It participates in carbohydrate metabolism; D-galactose 6-phosphate degradation; D-tagatose 6-phosphate from D-galactose 6-phosphate: step 1/1. The sequence is that of Galactose-6-phosphate isomerase subunit LacA from Streptococcus pneumoniae (strain P1031).